The chain runs to 75 residues: Small ribosomal subunit protein bS18 (75 aa).

The protein belongs to the bacterial ribosomal protein bS18 family. As to quaternary structure, part of the 30S ribosomal subunit. Forms a tight heterodimer with protein bS6.

Functionally, binds as a heterodimer with protein bS6 to the central domain of the 16S rRNA, where it helps stabilize the platform of the 30S subunit. The chain is Small ribosomal subunit protein bS18 from Shewanella baltica (strain OS223).